Consider the following 817-residue polypeptide: MAGAPAPPPPPPPPALGGSAPKPAKSVMQGRDALLGDIRKGMKLKKAETNDRSAPIVGGGVVSSASGSSGTVSSKGPSMSAPPIPGMGAPQLGDILAGGIPKLKHINNNASTKPSPSASAPPIPGAVPSVAAPPIPNAPLSPAPAVPSIPSSSAPPIPDIPSSAAPPIPIVPSSPAPPLPLSGASAPKVPQNRPHMPSVRPAHRSHQRKSSNISLPSVSAPPLPSASLPTHVSNPPQAPPPPPTPTIGLDSKNIKPTDNAVSPPSSEVPAGGLPFLAEINARRSERGAVEGVSSTKIQTENHKSPSQPPLPSSAPPIPTSHAPPLPPTAPPPPSLPNVTSAPKKATSAPAPPPPPLPAAMSSASTNSVKATPVPPTLAPPLPNTTSVPPNKASSMPAPPPPPPPPPGAFSTSSALSASSIPLAPLPPPPPPSVATSVPSAPPPPPTLTTNKPSASSKQSKISSSSSSSAVTPGGPLPFLAEIQKKRDDRFVVGGDTGYTTQDKQEDVIGSSKDDNVRPSPISPSINPPKQSSQNGMSFLDEIESKLHKQTSSNAFNAPPPHTDAMAPPLPPSAPPPPITSLPTPTASGDDHTNDKSETVLGMKKAKAPALPGHVPPPPVPPVLSDDSKNNVPAASLLHDVLPSSNLEKPPSPPVAAAPPLPTFSAPSLPQQSVSTSIPSPPPVAPTLSVRTETESISKNPTKSPPPPPSPSTMDTGTSNSPSKNLKQRLFSTGGSTLQHKHNTHTNQPDVDVGRYTIGGSNSIVGAKSGNERIVIDDSRFKWTNVSQMPKPRPFQNKTKLYPSGKGSSVPLDLTLFT.

The span at 1-15 (MAGAPAPPPPPPPPA) shows a compositional bias: pro residues. Residues 1–752 (MAGAPAPPPP…THTNQPDVDV (752 aa)) form a disordered region. The WH2 1 domain maps to 30 to 47 (GRDALLGDIRKGMKLKKA). Basic and acidic residues predominate over residues 37-51 (DIRKGMKLKKAETND). The segment covering 62–79 (VSSASGSSGTVSSKGPSM) has biased composition (low complexity). Residues 87–106 (MGAPQLGDILAGGIPKLKHI) enclose the WH2 2 domain. N-linked (GlcNAc...) asparagine glycosylation occurs at Asn-109. Residues 119–180 (SAPPIPGAVP…VPSSPAPPLP (62 aa)) are compositionally biased toward pro residues. N-linked (GlcNAc...) asparagine glycosylation is present at Asn-212. The span at 236 to 245 (PQAPPPPPTP) shows a compositional bias: pro residues. A compositionally biased stretch (polar residues) spans 254–265 (IKPTDNAVSPPS). The span at 306–335 (SQPPLPSSAPPIPTSHAPPLPPTAPPPPSL) shows a compositional bias: pro residues. The segment covering 336–348 (PNVTSAPKKATSA) has biased composition (low complexity). Asn-337 carries N-linked (GlcNAc...) asparagine glycosylation. Residues 372–382 (PVPPTLAPPLP) show a composition bias toward pro residues. Asn-383 is a glycosylation site (N-linked (GlcNAc...) asparagine). Low complexity predominate over residues 383 to 395 (NTTSVPPNKASSM). Positions 396–407 (PAPPPPPPPPPG) are enriched in pro residues. A compositionally biased stretch (low complexity) spans 408–422 (AFSTSSALSASSIPL). Residues 423 to 432 (APLPPPPPPS) show a composition bias toward pro residues. The span at 447–469 (LTTNKPSASSKQSKISSSSSSSA) shows a compositional bias: low complexity. Over residues 502–516 (DKQEDVIGSSKDDNV) the composition is skewed to basic and acidic residues. Over residues 518–534 (PSPISPSINPPKQSSQN) the composition is skewed to low complexity. The residue at position 519 (Ser-519) is a Phosphoserine. The segment covering 557-579 (APPPHTDAMAPPLPPSAPPPPIT) has biased composition (pro residues). Positions 588 to 597 (GDDHTNDKSE) are enriched in basic and acidic residues. A compositionally biased stretch (pro residues) spans 649–661 (PPSPPVAAAPPLP). Positions 713 to 737 (MDTGTSNSPSKNLKQRLFSTGGSTL) are enriched in polar residues. Ser-762 carries the post-translational modification Phosphoserine. Residues Asn-784 and Asn-796 are each glycosylated (N-linked (GlcNAc...) asparagine). The disordered stretch occupies residues 786–806 (SQMPKPRPFQNKTKLYPSGKG).

This sequence belongs to the verprolin family. N-glycosylated.

The protein localises to the cytoplasm. It is found in the cytoskeleton. In terms of biological role, involved in cytoskeletal organization and cellular growth. May exert its effects on the cytoskeleton directly, or indirectly via proline-binding proteins (e.g. profilin) or proteins possessing SH3 domains. The chain is Verprolin (VRP1) from Saccharomyces cerevisiae (strain ATCC 204508 / S288c) (Baker's yeast).